The sequence spans 117 residues: MDTETSPLLSHNLSTREGIKQSTQGLLAHTIAKYPGTTAILLGILILLVIILIIVAIVYYNRAVDCKSSMPKPPPSYYVQQPEPHHHFPVFFRKRKNSTSQQSHIPSDEQLAELAHS.

Asn12 is a glycosylation site (N-linked (GlcNAc...) asparagine; by host). A helical transmembrane segment spans residues 39–59 (AILLGILILLVIILIIVAIVY). A disordered region spans residues 96–117 (KNSTSQQSHIPSDEQLAELAHS). N-linked (GlcNAc...) asparagine; by host glycosylation occurs at Asn97.

The protein belongs to the asfivirus minor capsid protein p17 family. As to quaternary structure, interacts with the minor capsid protein M1249L and with the hexon capsid protein p72 capsomers; these interactions form a rigid zipper structure that stabilizes the capsomers. Interacts with host STING1.

Its subcellular location is the virion membrane. It localises to the host endoplasmic reticulum membrane. Its function is as follows. Together with the penton and the other minor capsid proteins (M1249L, p49), forms a complicated network immediately below the outer capsid shell, stabilizing the whole capsid. Three copies of p17 encircle each p72 capsomer in the inner capsid shell, anchoring p72 capsomers on the inner membrane. Required for the assembly of the capsid and icosahedral morphogenesis. Additionally, inhibits the host cGAS-STING pathway through its interaction with STING1 and subsequent interference of the recruitment of downstream components TBK1 and IKBKE. This chain is Minor capsid protein p17, found in African swine fever virus (isolate Warthog/Namibia/Wart80/1980) (ASFV).